Here is a 46-residue protein sequence, read N- to C-terminus: GPSFCKADEKPCEYHADCCNCCLSGICAPSTNWILPGCSTSSFFKI.

Residues P2 and P11 each carry the 4-hydroxyproline; partial modification. 4 disulfides stabilise this stretch: C5-C19, C12-C22, C18-C27, and C21-C38. At P29 the chain carries 4-hydroxyproline. F44 is subject to D-phenylalanine.

This sequence belongs to the conotoxin I1 superfamily. In terms of processing, the natural D-Phe-44 form of the peptide is more potent than the L-Phe-44 form. In terms of tissue distribution, expressed by the venom duct.

Its subcellular location is the secreted. Iota-conotoxins bind to voltage-gated sodium channels and act as agonists by shifting the voltage-dependence of activation to more hyperpolarized levels. This toxin acts on Nav1.6/SCN8A &gt; Nav1.2/SCN2A &gt; Nav1.7/SCN9A sodium channels. Produces general excitatory symptoms upon intracorporeal injection and repetitive action potentials in the frog cutaneous pectoris muscle. Natural peptide (with D-Phe) is active on nerve, but not on muscle. Synthetic peptide (with L-Phe) is not active on both nerve and muscle. The sequence is that of Iota-conotoxin RXIA from Conus radiatus (Rayed cone).